The sequence spans 46 residues: Short transmembrane mitochondrial protein 1 (46 aa).

The helical transmembrane segment at 7–23 threads the bilayer; the sequence is GFTLGNVVGMYLAQNYE.

Belongs to the STMP1 family. As to expression, widely expressed. Expressed more abundantly in brain compared with other tissues such as heart, muscle and liver.

Its subcellular location is the mitochondrion inner membrane. The protein localises to the mitochondrion outer membrane. It localises to the mitochondrion intermembrane space. In terms of biological role, microprotein involved in mitochondrial respiratory chain complex III (ubiquinol-cytochrome c oxidoreductase) and complex IV (mitochondrial cytochrome c oxidase complex) assembly. Required for the formation of mitochondrial supercomplexes (SCs). Also required for the activation of the NLRP3 inflammasome. This chain is Short transmembrane mitochondrial protein 1, found in Danio rerio (Zebrafish).